Reading from the N-terminus, the 228-residue chain is UPF0134 protein MPN_137 (228 aa).

Belongs to the UPF0134 family.

This Mycoplasma pneumoniae (strain ATCC 29342 / M129 / Subtype 1) (Mycoplasmoides pneumoniae) protein is UPF0134 protein MPN_137.